We begin with the raw amino-acid sequence, 513 residues long: 2,3-bisphosphoglycerate-independent phosphoglycerate mutase (513 aa).

Positions 12 and 62 each coordinate Mn(2+). Catalysis depends on Ser62, which acts as the Phosphoserine intermediate. Substrate is bound by residues His123, 153 to 154 (RD), Arg185, Arg191, 261 to 264 (RSDR), and Lys335. Mn(2+) is bound by residues Asp402, His406, Asp443, His444, and His462.

This sequence belongs to the BPG-independent phosphoglycerate mutase family. In terms of assembly, monomer. Mn(2+) serves as cofactor.

The enzyme catalyses (2R)-2-phosphoglycerate = (2R)-3-phosphoglycerate. It participates in carbohydrate degradation; glycolysis; pyruvate from D-glyceraldehyde 3-phosphate: step 3/5. In terms of biological role, catalyzes the interconversion of 2-phosphoglycerate and 3-phosphoglycerate. This Thiobacillus denitrificans (strain ATCC 25259 / T1) protein is 2,3-bisphosphoglycerate-independent phosphoglycerate mutase.